A 94-amino-acid polypeptide reads, in one-letter code: Co-chaperonin GroES (94 aa).

It belongs to the GroES chaperonin family. As to quaternary structure, heptamer of 7 subunits arranged in a ring. Interacts with the chaperonin GroEL.

Its subcellular location is the cytoplasm. In terms of biological role, together with the chaperonin GroEL, plays an essential role in assisting protein folding. The GroEL-GroES system forms a nano-cage that allows encapsulation of the non-native substrate proteins and provides a physical environment optimized to promote and accelerate protein folding. GroES binds to the apical surface of the GroEL ring, thereby capping the opening of the GroEL channel. This is Co-chaperonin GroES from Geobacillus stearothermophilus (Bacillus stearothermophilus).